A 163-amino-acid polypeptide reads, in one-letter code: Small ribosomal subunit protein uS5 (163 aa).

Residues 11–74 form the S5 DRBM domain; it reads LTDRVVHINR…EQAKKNLIRV (64 aa).

It belongs to the universal ribosomal protein uS5 family. As to quaternary structure, part of the 30S ribosomal subunit. Contacts proteins S4 and S8.

Its function is as follows. With S4 and S12 plays an important role in translational accuracy. In terms of biological role, located at the back of the 30S subunit body where it stabilizes the conformation of the head with respect to the body. This Syntrophotalea carbinolica (strain DSM 2380 / NBRC 103641 / GraBd1) (Pelobacter carbinolicus) protein is Small ribosomal subunit protein uS5.